We begin with the raw amino-acid sequence, 295 residues long: Bifunctional protein FolD (295 aa).

NADP(+) is bound by residues 165 to 167 (GRG), serine 192, and isoleucine 233.

This sequence belongs to the tetrahydrofolate dehydrogenase/cyclohydrolase family. Homodimer.

It carries out the reaction (6R)-5,10-methylene-5,6,7,8-tetrahydrofolate + NADP(+) = (6R)-5,10-methenyltetrahydrofolate + NADPH. It catalyses the reaction (6R)-5,10-methenyltetrahydrofolate + H2O = (6R)-10-formyltetrahydrofolate + H(+). The protein operates within one-carbon metabolism; tetrahydrofolate interconversion. Its function is as follows. Catalyzes the oxidation of 5,10-methylenetetrahydrofolate to 5,10-methenyltetrahydrofolate and then the hydrolysis of 5,10-methenyltetrahydrofolate to 10-formyltetrahydrofolate. In Tropheryma whipplei (strain TW08/27) (Whipple's bacillus), this protein is Bifunctional protein FolD.